The chain runs to 495 residues: UDP-glycosyltransferase 73C10 (495 aa).

Catalysis depends on His24, which acts as the Proton acceptor. His24 is an an anthocyanidin binding site. Catalysis depends on Asp129, which acts as the Charge relay. UDP-alpha-D-glucose contacts are provided by Gln358, His373, Trp376, Asn377, Ser378, and Glu381. Residue Gly396 coordinates an anthocyanidin. 2 residues coordinate UDP-alpha-D-glucose: Asp397 and Gln398.

This sequence belongs to the UDP-glycosyltransferase family.

The enzyme catalyses oleanolate + UDP-alpha-D-glucose = oleanolate 3-O-beta-D-glucoside + UDP + H(+). In terms of biological role, catalyzes the transfer of a glucose (Glc) moiety from UDP-Glc to the C-3 position of the oleanane sapogenins oleanolate and hederagenin, and to the C-28 carboxylic group of the lupane sapogenin betulinate. The monoglucosylated hederagenin 3-O-beta-D-glucoside is a feeding deterrent of the yellow-striped flea beetle (Phyllotreta nemorum). The protein is UDP-glycosyltransferase 73C10 of Barbarea vulgaris (Yellow rocket).